A 611-amino-acid polypeptide reads, in one-letter code: Protein spaetzle 3 (611 aa).

The first 14 residues, 1–14 (MALTNFSLPFGALG), serve as a signal peptide directing secretion. N-linked (GlcNAc...) asparagine glycosylation is present at Asn-5. The segment at 57-322 (EYFKNNPYAP…NDKSNNNQMP (266 aa)) is disordered. Low complexity-rich tracts occupy residues 104-120 (QQVQ…QHQQ), 127-153 (SVSF…LTQT), and 169-185 (PGQQ…QQKQ). Polar residues predominate over residues 191-210 (GSASATFTKNSGSFSITSFG). Pro residues predominate over residues 218–239 (PPQPQQPPPSQQQQPPPAPPPQ). The segment covering 288–306 (YDVEEGEEDEEEDGEEEGQ) has biased composition (acidic residues). N-linked (GlcNAc...) asparagine glycosylation is found at Asn-335 and Asn-351. The tract at residues 477–518 (KKRQAAAGGSRNRGGSAGGSGNGNTNANRQPGNKNGSSGTGR) is disordered. Over residues 487–498 (RNRGGSAGGSGN) the composition is skewed to gly residues. The N-linked (GlcNAc...) asparagine glycan is linked to Asn-511. One can recognise a Spaetzle domain in the interval 521–609 (ACESKIEIVT…LFPSCCVCRC (89 aa)). Disulfide bonds link Cys-522-Cys-573, Cys-559-Cys-605, and Cys-567-Cys-607.

In terms of assembly, homodimer; disulfide-linked.

In terms of biological role, neurotrophin which may function as a ligand to the Toll-related receptor Tollo. Involved in a Tollo and JNK signaling pathway that positively regulates neuromuscular junction (NMJ) growth in presynaptic motorneurons. May function by activating Tollo to promote the phosphorylation of JNK. The protein is Protein spaetzle 3 of Drosophila melanogaster (Fruit fly).